Consider the following 424-residue polypeptide: Serine--tRNA ligase (424 aa).

L-serine is bound at residue 229–231 (TAE). ATP contacts are provided by residues 260–262 (RKE) and valine 276. Position 283 (glutamate 283) interacts with L-serine. ATP is bound at residue 347–350 (ELVS). Position 383 (threonine 383) interacts with L-serine.

This sequence belongs to the class-II aminoacyl-tRNA synthetase family. Type-1 seryl-tRNA synthetase subfamily. In terms of assembly, homodimer. The tRNA molecule binds across the dimer.

The protein localises to the cytoplasm. It carries out the reaction tRNA(Ser) + L-serine + ATP = L-seryl-tRNA(Ser) + AMP + diphosphate + H(+). The catalysed reaction is tRNA(Sec) + L-serine + ATP = L-seryl-tRNA(Sec) + AMP + diphosphate + H(+). It functions in the pathway aminoacyl-tRNA biosynthesis; selenocysteinyl-tRNA(Sec) biosynthesis; L-seryl-tRNA(Sec) from L-serine and tRNA(Sec): step 1/1. In terms of biological role, catalyzes the attachment of serine to tRNA(Ser). Is also able to aminoacylate tRNA(Sec) with serine, to form the misacylated tRNA L-seryl-tRNA(Sec), which will be further converted into selenocysteinyl-tRNA(Sec). This Methanosphaera stadtmanae (strain ATCC 43021 / DSM 3091 / JCM 11832 / MCB-3) protein is Serine--tRNA ligase.